The following is a 639-amino-acid chain: Actin assembly-inducing protein (639 aa).

The signal sequence occupies residues 1 to 29; sequence MGLNRFMRAMMVVFITANCITINPDIIFA. Disordered regions lie at residues 36–71, 132–212, 285–308, and 320–341; these read SSLNTDEWEEEKTEEQPSEVNTGPRYETAREVSSRD, RRHP…QPFF, LGFNAPATSEPSSFEFPPPPTDEE, and LGFNAPATSEPSSFEFPPPPTE. Over residues 41–52 the composition is skewed to acidic residues; sequence DEWEEEKTEEQP. Positions 62-71 are enriched in basic and acidic residues; the sequence is ETAREVSSRD. Residues 190 to 210 show a composition bias toward polar residues; sequence DSSMQSADESSPQPLKANQQP. 2 consecutive repeat copies span residues 264 to 298 and 299 to 333. A 5 X approximate tandem repeats, Pro-rich region spans residues 264–333; the sequence is DFPPPPTDEE…APATSEPSSF (70 aa). The 3; approximate repeat unit spans residues 334-378; it reads EFPPPPTEDELEIIRETASSLDSSFTRGDLASLRNAINRHSQNFS. The Cell attachment site signature appears at 360-362; the sequence is RGD. Disordered regions lie at residues 372-459 and 474-610; these read RHSQ…LSPK and KKTP…EPGN. A 4; approximate repeat occupies 379-417; it reads DFPPIPTEEELNGRGGRPTSEEFSSLNSGDFTDDENSET. Acidic residues predominate over residues 409 to 422; it reads FTDDENSETTEEEI. One copy of the 5; truncated repeat lies at 418 to 422; it reads TEEEI. The segment covering 423–433 has biased composition (basic and acidic residues); the sequence is DRLADLRDRGT. Low complexity-rich tracts occupy residues 450-459 and 490-509; these read SSPVPSLSPK and KKTTTKTVTKKPTPVKTAPK. Composition is skewed to basic and acidic residues over residues 553–572 and 588–609; these read EATESDKEEMKPQTEEKMVE and GIEEGKLIAKSAEDEKAKEEPG. A helical membrane pass occupies residues 613–633; that stretch reads TLILAMLAIGVFSLGAFIKII.

It localises to the cell membrane. Its function is as follows. Virulence factor required for host cell microfilament interaction. It induces actin assembly around the bacteria to allow it to move within the cytoplasm. It is involved in the actin polymerization process. It seems to act as a nucleator that induces the reorganization of the actin cytoskeleton. The sequence is that of Actin assembly-inducing protein (actA) from Listeria monocytogenes serovar 1/2a (strain ATCC BAA-679 / EGD-e).